A 140-amino-acid polypeptide reads, in one-letter code: Ribosomal RNA large subunit methyltransferase H (140 aa).

S-adenosyl-L-methionine contacts are provided by L55 and G87.

It belongs to the RNA methyltransferase RlmH family. In terms of assembly, homodimer.

It is found in the cytoplasm. The catalysed reaction is pseudouridine(1915) in 23S rRNA + S-adenosyl-L-methionine = N(3)-methylpseudouridine(1915) in 23S rRNA + S-adenosyl-L-homocysteine + H(+). In terms of biological role, specifically methylates the pseudouridine at position 1915 (m3Psi1915) in 23S rRNA. The polypeptide is Ribosomal RNA large subunit methyltransferase H (Rhizorhabdus wittichii (strain DSM 6014 / CCUG 31198 / JCM 15750 / NBRC 105917 / EY 4224 / RW1) (Sphingomonas wittichii)).